Consider the following 175-residue polypeptide: Bifunctional protein PyrR (175 aa).

Substrate-binding positions include T40–R41, R85, D102–T110, R135, and V159. The PRPP-binding signature appears at V98–T110.

Belongs to the purine/pyrimidine phosphoribosyltransferase family. PyrR subfamily. Homodimer and homohexamer; in equilibrium.

The catalysed reaction is UMP + diphosphate = 5-phospho-alpha-D-ribose 1-diphosphate + uracil. In terms of biological role, regulates transcriptional attenuation of the pyrimidine nucleotide (pyr) operon by binding in a uridine-dependent manner to specific sites on pyr mRNA. This disrupts an antiterminator hairpin in the RNA and favors formation of a downstream transcription terminator, leading to a reduced expression of downstream genes. Also displays a weak uracil phosphoribosyltransferase activity which is not physiologically significant. This Staphylococcus epidermidis (strain ATCC 35984 / DSM 28319 / BCRC 17069 / CCUG 31568 / BM 3577 / RP62A) protein is Bifunctional protein PyrR.